The chain runs to 192 residues: Ion-translocating oxidoreductase complex subunit A (192 aa).

The next 6 helical transmembrane spans lie at 5–25, 39–59, 65–85, 102–122, 134–154, and 171–191; these read LLLL…FLGL, IGMS…SYLV, LPFE…AVVV, ALGI…VALL, AIYG…FSAM, and AIAM…TGLV.

Belongs to the NqrDE/RnfAE family. As to quaternary structure, the complex is composed of six subunits: RnfA, RnfB, RnfC, RnfD, RnfE and RnfG.

Its subcellular location is the cell inner membrane. Part of a membrane-bound complex that couples electron transfer with translocation of ions across the membrane. This is Ion-translocating oxidoreductase complex subunit A from Shewanella sediminis (strain HAW-EB3).